Reading from the N-terminus, the 506-residue chain is Maturase K (506 aa).

This sequence belongs to the intron maturase 2 family. MatK subfamily.

It is found in the plastid. The protein localises to the chloroplast. Its function is as follows. Usually encoded in the trnK tRNA gene intron. Probably assists in splicing its own and other chloroplast group II introns. This Hydrangea macrophylla (Bigleaf hydrangea) protein is Maturase K.